The primary structure comprises 297 residues: Juvenile hormone acid O-methyltransferase (297 aa).

This sequence belongs to the methyltransferase superfamily. As to expression, predominantly expressed in corpora allata. Also expressed at low level in testis.

The enzyme catalyses (2E,6E)-farnesoate + S-adenosyl-L-methionine = methyl (2E,6E)-farnesoate + S-adenosyl-L-homocysteine. It carries out the reaction juvenile hormone III carboxylate + S-adenosyl-L-methionine = juvenile hormone III + S-adenosyl-L-homocysteine. In terms of biological role, O-methyltransferase that transfers a methyl group from S-adenosyl-L-methionine (SAM) to the carboxyl group of juvenile hormone acids to produce active juvenile hormones in the corpora allata, the last step during juvenile hormone biosynthesis. Also able to methylate farnesoate to methyl farnesoate. This Drosophila melanogaster (Fruit fly) protein is Juvenile hormone acid O-methyltransferase.